We begin with the raw amino-acid sequence, 423 residues long: Imidazolonepropionase (423 aa).

Residues histidine 87 and histidine 89 each coordinate Fe(3+). Zn(2+)-binding residues include histidine 87 and histidine 89. 4-imidazolone-5-propanoate is bound by residues arginine 96, tyrosine 159, and histidine 192. Tyrosine 159 lines the N-formimidoyl-L-glutamate pocket. Residue histidine 257 participates in Fe(3+) binding. Histidine 257 serves as a coordination point for Zn(2+). Glutamate 260 contributes to the 4-imidazolone-5-propanoate binding site. Aspartate 331 is a binding site for Fe(3+). Aspartate 331 contacts Zn(2+). N-formimidoyl-L-glutamate contacts are provided by asparagine 333 and glycine 335. Serine 336 lines the 4-imidazolone-5-propanoate pocket.

Belongs to the metallo-dependent hydrolases superfamily. HutI family. Zn(2+) serves as cofactor. Requires Fe(3+) as cofactor.

It is found in the cytoplasm. It carries out the reaction 4-imidazolone-5-propanoate + H2O = N-formimidoyl-L-glutamate. Its pathway is amino-acid degradation; L-histidine degradation into L-glutamate; N-formimidoyl-L-glutamate from L-histidine: step 3/3. Catalyzes the hydrolytic cleavage of the carbon-nitrogen bond in imidazolone-5-propanoate to yield N-formimidoyl-L-glutamate. It is the third step in the universal histidine degradation pathway. The polypeptide is Imidazolonepropionase (Porphyromonas gingivalis (strain ATCC BAA-308 / W83)).